The chain runs to 329 residues: Interleukin-12 subunit beta (329 aa).

The signal sequence occupies residues 1–22; that stretch reads MCHQWLVLSWFSLVLLASPLMA. One can recognise an Ig-like C2-type domain in the interval 29–106; the sequence is DVYVVELDWY…LSHSHLLLHK (78 aa). A disulfide bridge links C50 with C90. Residues N125, N135, and N223 are each glycosylated (N-linked (GlcNAc...) asparagine). The region spanning 238–329 is the Fibronectin type-III domain; the sequence is PPKNLQLKPL…WSEWASVSCS (92 aa).

This sequence belongs to the IL-12B family. As to quaternary structure, heterodimer with IL12A; disulfide-linked. The heterodimer is known as interleukin IL-12. Heterodimer with IL23A; disulfide-linked. The heterodimer is known as interleukin IL-23. Also secreted as a monomer. Interacts with NBR1; this interaction promotes IL-12 secretion.

It localises to the secreted. Its function is as follows. Cytokine that can act as a growth factor for activated T and NK cells, enhance the lytic activity of NK/lymphokine-activated killer cells, and stimulate the production of IFN-gamma by resting PBMC. Functionally, associates with IL23A to form the IL-23 interleukin, a heterodimeric cytokine which functions in innate and adaptive immunity. IL-23 may constitute with IL-17 an acute response to infection in peripheral tissues. IL-23 binds to a heterodimeric receptor complex composed of IL12RB1 and IL23R, activates the Jak-Stat signaling cascade, stimulates memory rather than naive T-cells and promotes production of pro-inflammatory cytokines. IL-23 induces autoimmune inflammation and thus may be responsible for autoimmune inflammatory diseases and may be important for tumorigenesis. The protein is Interleukin-12 subunit beta (IL12B) of Equus caballus (Horse).